The following is a 485-amino-acid chain: Adenosylhomocysteinase (485 aa).

3 residues coordinate substrate: Thr-60, Asp-146, and Glu-208. 209–211 (TTT) is a binding site for NAD(+). Substrate contacts are provided by Lys-238 and Asp-242. Residues Asn-243, 272 to 277 (GYGDVG), Glu-295, Asn-330, 351 to 353 (IGH), and Asn-399 contribute to the NAD(+) site.

Belongs to the adenosylhomocysteinase family. The cofactor is NAD(+).

The protein resides in the cytoplasm. It catalyses the reaction S-adenosyl-L-homocysteine + H2O = L-homocysteine + adenosine. The protein operates within amino-acid biosynthesis; L-homocysteine biosynthesis; L-homocysteine from S-adenosyl-L-homocysteine: step 1/1. May play a key role in the regulation of the intracellular concentration of adenosylhomocysteine. The sequence is that of Adenosylhomocysteinase from Streptomyces griseus subsp. griseus (strain JCM 4626 / CBS 651.72 / NBRC 13350 / KCC S-0626 / ISP 5235).